A 656-amino-acid polypeptide reads, in one-letter code: FAST kinase domain-containing protein 3, mitochondrial (656 aa).

An RAP domain is found at 587-645 (VALCIDGPQRFCLGSKHLLGKEAIKQRHLRLLGYQVVQVPYHELELLTSRLELVDYLQR).

It belongs to the FAST kinase family.

It localises to the mitochondrion. In terms of biological role, required for normal mitochondrial respiration. Increases steady-state levels and half-lives of a subset of mature mitochondrial mRNAs MT-ND2, MT-ND3, MT-CYTB, MT-CO2, and MT-ATP8/6. Promotes MT-CO1 mRNA translation and increases mitochondrial complex IV assembly and activity. The protein is FAST kinase domain-containing protein 3, mitochondrial (Fastkd3) of Rattus norvegicus (Rat).